We begin with the raw amino-acid sequence, 562 residues long: Formate--tetrahydrofolate ligase (562 aa).

An ATP-binding site is contributed by 70 to 77; the sequence is TPAGEGKS.

Belongs to the formate--tetrahydrofolate ligase family.

The enzyme catalyses (6S)-5,6,7,8-tetrahydrofolate + formate + ATP = (6R)-10-formyltetrahydrofolate + ADP + phosphate. The protein operates within one-carbon metabolism; tetrahydrofolate interconversion. In Paenarthrobacter aurescens (strain TC1), this protein is Formate--tetrahydrofolate ligase.